A 122-amino-acid chain; its full sequence is UPF0102 protein xcc-b100_3645 (122 aa).

Belongs to the UPF0102 family.

This Xanthomonas campestris pv. campestris (strain B100) protein is UPF0102 protein xcc-b100_3645.